The primary structure comprises 315 residues: Glycine--tRNA ligase alpha subunit (315 aa).

This sequence belongs to the class-II aminoacyl-tRNA synthetase family. In terms of assembly, tetramer of two alpha and two beta subunits.

The protein resides in the cytoplasm. It carries out the reaction tRNA(Gly) + glycine + ATP = glycyl-tRNA(Gly) + AMP + diphosphate. The protein is Glycine--tRNA ligase alpha subunit of Pseudomonas syringae pv. tomato (strain ATCC BAA-871 / DC3000).